The chain runs to 975 residues: Monofunctional C1-tetrahydrofolate synthase, mitochondrial (975 aa).

The transit peptide at 1–30 (MSARLPFVLRRLARPQHPGSPRRLPSLCRA) directs the protein to the mitochondrion. The disordered stretch occupies residues 13-45 (ARPQHPGSPRRLPSLCRASSGRGSGCGGGEGLL). The methylenetetrahydrofolate dehydrogenase and cyclohydrolase stretch occupies residues 31–345 (SSGRGSGCGG…REQQHRRWRL (315 aa)). Over residues 34-44 (RGSGCGGGEGL) the composition is skewed to gly residues. Residue lysine 187 is modified to N6-acetyllysine; alternate. Lysine 187 carries the N6-succinyllysine; alternate modification. Residues 346–975 (HCLKLQPLSP…TETEQVKGLF (630 aa)) form a formyltetrahydrofolate synthetase region. The residue at position 354 (serine 354) is a Phosphoserine. 420-427 (TPLGEGKS) contacts ATP. At lysine 593 the chain carries N6-succinyllysine.

It in the N-terminal section; belongs to the tetrahydrofolate dehydrogenase/cyclohydrolase family. In the C-terminal section; belongs to the formate--tetrahydrofolate ligase family. In terms of assembly, homodimer.

It is found in the mitochondrion. The enzyme catalyses (6S)-5,6,7,8-tetrahydrofolate + formate + ATP = (6R)-10-formyltetrahydrofolate + ADP + phosphate. The protein operates within one-carbon metabolism; tetrahydrofolate interconversion. May provide the missing metabolic reaction required to link the mitochondria and the cytoplasm in the mammalian model of one-carbon folate metabolism complementing thus the enzymatic activities of MTHFD2. The chain is Monofunctional C1-tetrahydrofolate synthase, mitochondrial (MTHFD1L) from Bos taurus (Bovine).